Here is a 340-residue protein sequence, read N- to C-terminus: UDP-glucose 4-epimerase (340 aa).

NAD(+) is bound by residues 12-13, 32-37, 59-60, 81-85, N100, S125, Y150, K154, and F179; these read FI, DNYGNS, DV, and FAGLK. Substrate is bound by residues S125 and Y150. Y150 (proton acceptor) is an active-site residue. Residues N180, 200–201, 217–219, R232, and 292–295 each bind substrate; these read NL, QVY, and RPGD.

The protein belongs to the NAD(P)-dependent epimerase/dehydratase family. In terms of assembly, homodimer. NAD(+) is required as a cofactor.

The catalysed reaction is UDP-alpha-D-glucose = UDP-alpha-D-galactose. The protein operates within carbohydrate metabolism; galactose metabolism. In terms of biological role, involved in the metabolism of galactose. Catalyzes the conversion of UDP-galactose (UDP-Gal) to UDP-glucose (UDP-Glc) through a mechanism involving the transient reduction of NAD. Can also epimerize UDP-GalNAc to UDP-GlcNAc. Involved in the lacto-N-biose I/galacto-N-biose (LNB/GNB) degradation pathway, which is important for host intestinal colonization by bifidobacteria. This is UDP-glucose 4-epimerase (lnpD) from Bifidobacterium longum subsp. longum (strain ATCC 15707 / DSM 20219 / JCM 1217 / NCTC 11818 / E194b).